The sequence spans 306 residues: N-acetylmuramic acid 6-phosphate etherase (306 aa).

The SIS domain occupies 62–225 (IAQAFQNGGR…TTASMIRIGK (164 aa)). Glutamate 90 functions as the Proton donor in the catalytic mechanism. Residue glutamate 121 is part of the active site.

The protein belongs to the GCKR-like family. MurNAc-6-P etherase subfamily. In terms of assembly, homodimer.

It catalyses the reaction N-acetyl-D-muramate 6-phosphate + H2O = N-acetyl-D-glucosamine 6-phosphate + (R)-lactate. Its pathway is amino-sugar metabolism; 1,6-anhydro-N-acetylmuramate degradation. It participates in amino-sugar metabolism; N-acetylmuramate degradation. The protein operates within cell wall biogenesis; peptidoglycan recycling. Its function is as follows. Specifically catalyzes the cleavage of the D-lactyl ether substituent of MurNAc 6-phosphate, producing GlcNAc 6-phosphate and D-lactate. Together with AnmK, is also required for the utilization of anhydro-N-acetylmuramic acid (anhMurNAc) either imported from the medium or derived from its own cell wall murein, and thus plays a role in cell wall recycling. The chain is N-acetylmuramic acid 6-phosphate etherase from Vibrio atlanticus (strain LGP32) (Vibrio splendidus (strain Mel32)).